The sequence spans 360 residues: Mitogen-activated protein kinase 14 (360 aa).

N-acetylserine is present on serine 2. At serine 2 the chain carries Phosphoserine. Threonine 16 is subject to Phosphothreonine. Residues 24 to 308 (YQNLSPVGSG…AAQALAHAYF (285 aa)) enclose the Protein kinase domain. ATP is bound by residues 30 to 38 (VGSGAYGSV) and lysine 53. The residue at position 53 (lysine 53) is an N6-acetyllysine. Catalysis depends on aspartate 150, which acts as the Proton acceptor. N6-acetyllysine is present on lysine 152. At threonine 180 the chain carries Phosphothreonine. Positions 180 to 182 (TGY) match the TXY motif. Phosphotyrosine is present on tyrosine 182. Tyrosine 323 bears the Phosphotyrosine; by ZAP70 mark.

It belongs to the protein kinase superfamily. CMGC Ser/Thr protein kinase family. MAP kinase subfamily. In terms of assembly, component of a signaling complex containing at least AKAP13, PKN1, MAPK14, ZAK and MAP2K3. Within this complex, AKAP13 interacts directly with PKN1, which in turn recruits MAPK14, MAP2K3 and ZAK. Binds to a kinase interaction motif within the protein tyrosine phosphatase, PTPRR. This interaction retains MAPK14 in the cytoplasm and prevents nuclear accumulation. Interacts with SPAG9 and GADD45A. Interacts with CDC25B, CDC25C, DUSP1, DUSP10, DUSP16, NP60, SUPT20H and TAB1. Interacts with casein kinase II subunits CSNK2A1 and CSNK2B. Interacts with PPM1D. Interacts with CDK5RAP3; recruits PPM1D to MAPK14 and may regulate its dephosphorylation. Interacts with DUSP2; this interaction does not lead to catalytic activation of DUSP2 and dephosphrylation of MAPK14. Mg(2+) is required as a cofactor. Post-translationally, dually phosphorylated on Thr-180 and Tyr-182 by the MAP2Ks MAP2K3/MKK3, MAP2K4/MKK4 and MAP2K6/MKK6 in response to inflammatory cytokines, environmental stress or growth factors, which activates the enzyme. Dual phosphorylation can also be mediated by TAB1-mediated autophosphorylation. TCR engagement in T-cells also leads to Tyr-323 phosphorylation by ZAP70. Dephosphorylated and inactivated by DUPS1, DUSP10 and DUSP16. PPM1D also mediates dephosphorylation and inactivation of MAPK14. In terms of processing, acetylated at Lys-53 and Lys-152 by KAT2B and EP300. Acetylation at Lys-53 increases the affinity for ATP and enhances kinase activity. Lys-53 and Lys-152 are deacetylated by HDAC3. Ubiquitinated. Ubiquitination leads to degradation by the proteasome pathway.

It is found in the cytoplasm. It localises to the nucleus. The enzyme catalyses L-seryl-[protein] + ATP = O-phospho-L-seryl-[protein] + ADP + H(+). It catalyses the reaction L-threonyl-[protein] + ATP = O-phospho-L-threonyl-[protein] + ADP + H(+). Its activity is regulated as follows. Activated by cell stresses such as DNA damage, heat shock, osmotic shock, anisomycin and sodium arsenite, as well as pro-inflammatory stimuli such as bacterial lipopolysaccharide (LPS) and interleukin-1. Activation occurs through dual phosphorylation of Thr-180 and Tyr-182 by either of two dual specificity kinases, MAP2K3/MKK3 or MAP2K6/MKK6, and potentially also MAP2K4/MKK4, as well as by TAB1-mediated autophosphorylation. MAPK14 phosphorylated on both Thr-180 and Tyr-182 is 10-20-fold more active than MAPK14 phosphorylated only on Thr-180, whereas MAPK14 phosphorylated on Tyr-182 alone is inactive. whereas Thr-180 is necessary for catalysis, Tyr-182 may be required for auto-activation and substrate recognition. Phosphorylated at Tyr-323 by ZAP70 in an alternative activation pathway in response to TCR signaling in T-cells. This alternative pathway is inhibited by GADD45A. Inhibited by dual specificity phosphatases, such as DUSP1, DUSP10, and DUSP16. Specifically inhibited by the binding of pyridinyl-imidazole compounds, which are cytokine-suppressive anti-inflammatory drugs (CSAID). SB203580 is an inhibitor of MAPK14. Serine/threonine kinase which acts as an essential component of the MAP kinase signal transduction pathway. MAPK14 is one of the four p38 MAPKs which play an important role in the cascades of cellular responses evoked by extracellular stimuli such as pro-inflammatory cytokines or physical stress leading to direct activation of transcription factors. Accordingly, p38 MAPKs phosphorylate a broad range of proteins and it has been estimated that they may have approximately 200 to 300 substrates each. Some of the targets are downstream kinases which are activated through phosphorylation and further phosphorylate additional targets. RPS6KA5/MSK1 and RPS6KA4/MSK2 can directly phosphorylate and activate transcription factors such as CREB1, ATF1, the NF-kappa-B isoform RELA/NFKB3, STAT1 and STAT3, but can also phosphorylate histone H3 and the nucleosomal protein HMGN1. RPS6KA5/MSK1 and RPS6KA4/MSK2 play important roles in the rapid induction of immediate-early genes in response to stress or mitogenic stimuli, either by inducing chromatin remodeling or by recruiting the transcription machinery. On the other hand, two other kinase targets, MAPKAPK2/MK2 and MAPKAPK3/MK3, participate in the control of gene expression mostly at the post-transcriptional level, by phosphorylating ZFP36 (tristetraprolin) and ELAVL1, and by regulating EEF2K, which is important for the elongation of mRNA during translation. MKNK1/MNK1 and MKNK2/MNK2, two other kinases activated by p38 MAPKs, regulate protein synthesis by phosphorylating the initiation factor EIF4E2. MAPK14 also interacts with casein kinase II, leading to its activation through autophosphorylation and further phosphorylation of TP53/p53. In the cytoplasm, the p38 MAPK pathway is an important regulator of protein turnover. For example, CFLAR is an inhibitor of TNF-induced apoptosis whose proteasome-mediated degradation is regulated by p38 MAPK phosphorylation. In a similar way, MAPK14 phosphorylates the ubiquitin ligase SIAH2, regulating its activity towards EGLN3. MAPK14 may also inhibit the lysosomal degradation pathway of autophagy by interfering with the intracellular trafficking of the transmembrane protein ATG9. Another function of MAPK14 is to regulate the endocytosis of membrane receptors by different mechanisms that impinge on the small GTPase RAB5A. In addition, clathrin-mediated EGFR internalization induced by inflammatory cytokines and UV irradiation depends on MAPK14-mediated phosphorylation of EGFR itself as well as of RAB5A effectors. Ectodomain shedding of transmembrane proteins is regulated by p38 MAPKs as well. In response to inflammatory stimuli, p38 MAPKs phosphorylate the membrane-associated metalloprotease ADAM17. Such phosphorylation is required for ADAM17-mediated ectodomain shedding of TGF-alpha family ligands, which results in the activation of EGFR signaling and cell proliferation. Another p38 MAPK substrate is FGFR1. FGFR1 can be translocated from the extracellular space into the cytosol and nucleus of target cells, and regulates processes such as rRNA synthesis and cell growth. FGFR1 translocation requires p38 MAPK activation. In the nucleus, many transcription factors are phosphorylated and activated by p38 MAPKs in response to different stimuli. Classical examples include ATF1, ATF2, ATF6, ELK1, PTPRH, DDIT3, TP53/p53 and MEF2C and MEF2A. The p38 MAPKs are emerging as important modulators of gene expression by regulating chromatin modifiers and remodelers. The promoters of several genes involved in the inflammatory response, such as IL6, IL8 and IL12B, display a p38 MAPK-dependent enrichment of histone H3 phosphorylation on 'Ser-10' (H3S10ph) in LPS-stimulated myeloid cells. This phosphorylation enhances the accessibility of the cryptic NF-kappa-B-binding sites marking promoters for increased NF-kappa-B recruitment. Phosphorylates CDC25B and CDC25C which is required for binding to 14-3-3 proteins and leads to initiation of a G2 delay after ultraviolet radiation. Phosphorylates TIAR following DNA damage, releasing TIAR from GADD45A mRNA and preventing mRNA degradation. The p38 MAPKs may also have kinase-independent roles, which are thought to be due to the binding to targets in the absence of phosphorylation. Protein O-Glc-N-acylation catalyzed by the OGT is regulated by MAPK14, and, although OGT does not seem to be phosphorylated by MAPK14, their interaction increases upon MAPK14 activation induced by glucose deprivation. This interaction may regulate OGT activity by recruiting it to specific targets such as neurofilament H, stimulating its O-Glc-N-acylation. Required in mid-fetal development for the growth of embryo-derived blood vessels in the labyrinth layer of the placenta. Also plays an essential role in developmental and stress-induced erythropoiesis, through regulation of EPO gene expression. Phosphorylates S100A9 at 'Thr-113'. The sequence is that of Mitogen-activated protein kinase 14 from Rattus norvegicus (Rat).